The primary structure comprises 120 residues: U13-lycotoxin-Ls1a (120 aa).

Residues Met1–Cys16 form the signal peptide. The propeptide occupies Phe17–Arg54. 4 disulfides stabilise this stretch: Cys56/Cys70, Cys63/Cys76, Cys69/Cys87, and Cys78/Cys85. Residues Cys56 to Cys95 enclose the Agouti domain.

Belongs to the neurotoxin 05 (agouti) family. Post-translationally, contains 6 disulfide bonds. As to expression, expressed by the venom gland.

The protein resides in the secreted. The chain is U13-lycotoxin-Ls1a from Lycosa singoriensis (Wolf spider).